The sequence spans 518 residues: Putative transposase for insertion sequence IS408 (518 aa).

Positions 11–94 (LKEVLRLKWA…PDYTALHREL (84 aa)) constitute an HTH IS408-type domain. Positions 23-44 (LTHRQISRAIGISVGAVSKFAA) form a DNA-binding region, H-T-H motif. The Integrase catalytic domain occupies 140-335 (QQHRAGEKLF…LPVRRYEIAT (196 aa)). The segment at 496–518 (LPTTPAEWRSPEHENVRGPDYYH) is disordered. Over residues 504–518 (RSPEHENVRGPDYYH) the composition is skewed to basic and acidic residues.

This sequence belongs to the transposase IS21/IS408/IS1162 family.

In terms of biological role, required for the transposition of the insertion element. The protein is Putative transposase for insertion sequence IS408 of Burkholderia multivorans (strain ATCC 17616 / 249).